Reading from the N-terminus, the 391-residue chain is Digeranylgeranylglycerophospholipid reductase (391 aa).

Positions 19, 38, 49, 50, 52, 99, 123, 279, 291, and 292 each coordinate FAD. Val-369 provides a ligand contact to a 2,3-bis-O-(geranylgeranyl)-sn-glycerol 1-phospholipid.

It belongs to the geranylgeranyl reductase family. DGGGPL reductase subfamily. It depends on FAD as a cofactor.

It carries out the reaction a 2,3-bis-O-phytanyl-sn-glycerol 1-phospholipid + 8 A = a 2,3-bis-O-(geranylgeranyl)-sn-glycerol 1-phospholipid + 8 AH2. It catalyses the reaction 2,3-bis-O-(phytanyl)-sn-glycerol 1-phosphate + 8 A = 2,3-bis-O-(geranylgeranyl)-sn-glycerol 1-phosphate + 8 AH2. The enzyme catalyses CDP-2,3-bis-O-(geranylgeranyl)-sn-glycerol + 8 AH2 = CDP-2,3-bis-O-(phytanyl)-sn-glycerol + 8 A. The catalysed reaction is archaetidylserine + 8 AH2 = 2,3-bis-O-phytanyl-sn-glycero-3-phospho-L-serine + 8 A. Its pathway is membrane lipid metabolism; glycerophospholipid metabolism. In terms of biological role, is involved in the reduction of 2,3-digeranylgeranylglycerophospholipids (unsaturated archaeols) into 2,3-diphytanylglycerophospholipids (saturated archaeols) in the biosynthesis of archaeal membrane lipids. Catalyzes the formation of archaetidic acid (2,3-di-O-phytanyl-sn-glyceryl phosphate) from 2,3-di-O-geranylgeranylglyceryl phosphate (DGGGP) via the hydrogenation of each double bond of the isoprenoid chains. Is also probably able to reduce double bonds of geranyl groups in CDP-2,3-bis-O-(geranylgeranyl)-sn-glycerol and archaetidylserine, thus acting at various stages in the biosynthesis of archaeal membrane lipids. The protein is Digeranylgeranylglycerophospholipid reductase of Methanococcus aeolicus (strain ATCC BAA-1280 / DSM 17508 / OCM 812 / Nankai-3).